Reading from the N-terminus, the 155-residue chain is Endoribonuclease YbeY (155 aa).

Zn(2+) is bound by residues His-119, His-123, and His-129.

It belongs to the endoribonuclease YbeY family. Requires Zn(2+) as cofactor.

It localises to the cytoplasm. Single strand-specific metallo-endoribonuclease involved in late-stage 70S ribosome quality control and in maturation of the 3' terminus of the 16S rRNA. The chain is Endoribonuclease YbeY from Mycoplasmopsis synoviae (strain 53) (Mycoplasma synoviae).